A 278-amino-acid chain; its full sequence is uncharacterized protein (278 aa).

Belongs to the short-chain dehydrogenases/reductases (SDR) family.

This is an uncharacterized protein from Bacillus subtilis (strain 168).